The sequence spans 350 residues: Putative ATP-binding protein BRA0745/BS1330_II0738 (350 aa).

An ABC transporter domain is found at valine 4 to isoleucine 234. Glycine 36–serine 43 contributes to the ATP binding site.

It belongs to the ABC transporter superfamily. In terms of assembly, the complex is composed of two ATP-binding proteins (BRA0745), two transmembrane proteins (BRA0749) and a solute-binding protein (BRA0748).

It is found in the cell inner membrane. Its function is as follows. Probably part of an ABC transporter complex. Probably responsible for energy coupling to the transport system. This Brucella suis biovar 1 (strain 1330) protein is Putative ATP-binding protein BRA0745/BS1330_II0738.